Reading from the N-terminus, the 256-residue chain is Enolase-phosphatase E1 (256 aa).

Residues D14 and E16 each coordinate Mg(2+). Substrate contacts are provided by residues 142-143 and K176; that span reads SS. Position 201 (D201) interacts with Mg(2+).

It belongs to the HAD-like hydrolase superfamily. MasA/MtnC family. Monomer. Requires Mg(2+) as cofactor.

Its subcellular location is the cytoplasm. The protein localises to the nucleus. It catalyses the reaction 5-methylsulfanyl-2,3-dioxopentyl phosphate + H2O = 1,2-dihydroxy-5-(methylsulfanyl)pent-1-en-3-one + phosphate. It functions in the pathway amino-acid biosynthesis; L-methionine biosynthesis via salvage pathway; L-methionine from S-methyl-5-thio-alpha-D-ribose 1-phosphate: step 3/6. Its pathway is amino-acid biosynthesis; L-methionine biosynthesis via salvage pathway; L-methionine from S-methyl-5-thio-alpha-D-ribose 1-phosphate: step 4/6. In terms of biological role, bifunctional enzyme that catalyzes the enolization of 2,3-diketo-5-methylthiopentyl-1-phosphate (DK-MTP-1-P) into the intermediate 2-hydroxy-3-keto-5-methylthiopentenyl-1-phosphate (HK-MTPenyl-1-P), which is then dephosphorylated to form the acireductone 1,2-dihydroxy-3-keto-5-methylthiopentene (DHK-MTPene). The polypeptide is Enolase-phosphatase E1 (Drosophila yakuba (Fruit fly)).